We begin with the raw amino-acid sequence, 364 residues long: Dihydroorotate dehydrogenase (quinone) (364 aa).

FMN is bound by residues 61 to 65 (AGFDK) and Ser-85. Lys-65 provides a ligand contact to substrate. 110–114 (NRMGF) contributes to the substrate binding site. Positions 139 and 170 each coordinate FMN. Position 170 (Asn-170) interacts with substrate. The active-site Nucleophile is Ser-173. Residue Asn-175 coordinates substrate. 2 residues coordinate FMN: Lys-214 and Ser-242. Position 243–244 (243–244 (NT)) interacts with substrate. FMN is bound by residues Gly-266, Gly-295, and 316–317 (YS).

The protein belongs to the dihydroorotate dehydrogenase family. Type 2 subfamily. Monomer. It depends on FMN as a cofactor.

The protein resides in the cell membrane. The enzyme catalyses (S)-dihydroorotate + a quinone = orotate + a quinol. It participates in pyrimidine metabolism; UMP biosynthesis via de novo pathway; orotate from (S)-dihydroorotate (quinone route): step 1/1. Functionally, catalyzes the conversion of dihydroorotate to orotate with quinone as electron acceptor. This is Dihydroorotate dehydrogenase (quinone) from Bradyrhizobium sp. (strain BTAi1 / ATCC BAA-1182).